A 160-amino-acid polypeptide reads, in one-letter code: Transcriptional repressor NrdR (160 aa).

Polar residues predominate over residues 1–11; the sequence is MRCPNCNSLDT. Residues 1–20 form a disordered region; the sequence is MRCPNCNSLDTQVKDSRPTE. The segment at 3-34 is a zinc-finger region; that stretch reads CPNCNSLDTQVKDSRPTEDSSVIRRRRVCVAC. The region spanning 49 to 139 is the ATP-cone domain; that stretch reads LTVIKRNGRR…VYRNFREAKD (91 aa).

It belongs to the NrdR family. Requires Zn(2+) as cofactor.

Negatively regulates transcription of bacterial ribonucleotide reductase nrd genes and operons by binding to NrdR-boxes. The sequence is that of Transcriptional repressor NrdR from Bradyrhizobium diazoefficiens (strain JCM 10833 / BCRC 13528 / IAM 13628 / NBRC 14792 / USDA 110).